Here is a 358-residue protein sequence, read N- to C-terminus: Alanine racemase (358 aa).

The active-site Proton acceptor; specific for D-alanine is the K35. K35 is modified (N6-(pyridoxal phosphate)lysine). R130 lines the substrate pocket. Y255 (proton acceptor; specific for L-alanine) is an active-site residue. M303 provides a ligand contact to substrate.

Belongs to the alanine racemase family. Pyridoxal 5'-phosphate serves as cofactor.

The enzyme catalyses L-alanine = D-alanine. Its pathway is amino-acid biosynthesis; D-alanine biosynthesis; D-alanine from L-alanine: step 1/1. In terms of biological role, catalyzes the interconversion of L-alanine and D-alanine. May also act on other amino acids. The protein is Alanine racemase (alr) of Shewanella baltica (strain OS223).